Consider the following 151-residue polypeptide: UPF0756 membrane protein GK2737 (151 aa).

Helical transmembrane passes span 5 to 25 (VLFLLLLLALGFLAKNKSLIV), 53 to 73 (WGVTVITIAVLAPIASGEIGF), 79 to 99 (SLQSLSAWVALASGIFVALIA), and 121 to 141 (ILAVSLFHGVAVGPLIGAGIA).

It belongs to the UPF0756 family.

It is found in the cell membrane. The sequence is that of UPF0756 membrane protein GK2737 from Geobacillus kaustophilus (strain HTA426).